The chain runs to 240 residues: Ribonuclease PH (240 aa).

Residues R87 and 125–127 (GTR) each bind phosphate.

Belongs to the RNase PH family. Homohexameric ring arranged as a trimer of dimers.

The enzyme catalyses tRNA(n+1) + phosphate = tRNA(n) + a ribonucleoside 5'-diphosphate. In terms of biological role, phosphorolytic 3'-5' exoribonuclease that plays an important role in tRNA 3'-end maturation. Removes nucleotide residues following the 3'-CCA terminus of tRNAs; can also add nucleotides to the ends of RNA molecules by using nucleoside diphosphates as substrates, but this may not be physiologically important. Probably plays a role in initiation of 16S rRNA degradation (leading to ribosome degradation) during starvation. This chain is Ribonuclease PH, found in Pseudomonas syringae pv. syringae (strain B728a).